The chain runs to 740 residues: E3 ubiquitin-protein ligase TRIM9 (740 aa).

The segment at 7–30 (CPTCKQLYANPVLLPCFHALCLGC) adopts an RING-type; degenerate zinc-finger fold. Positions 64 to 73 (GNGGGAGGGA) are enriched in gly residues. The tract at residues 64–114 (GNGGGAGGGAAAPVTNPNGPGTRHSSHSSAASTASSNTGSESVTSDQDQSD) is disordered. Positions 74 to 105 (AAPVTNPNGPGTRHSSHSSAASTASSNTGSES) are enriched in low complexity. The B box-type 1; atypical zinc finger occupies 195–244 (REALRCQMCETDPKVASLICEQCEIRYCDACRELTHPARGPLAKHTLVKP). Cys200, Cys203, Cys225, His230, Cys255, His258, Cys277, and His283 together coordinate Zn(2+). Residues 250–291 (QRESVCGEHEETLSQYCLSCKAPACGLCIGELRHQAHDVQSI) form a B box-type 2 zinc finger. Residues 294 to 324 (TCKAQKTELSHNLQQLSEKARSTTEFIQRLK) adopt a coiled-coil conformation. Residues 399–459 (LKETDSAAFL…ARAIDNLNFI (61 aa)) enclose the COS domain. In terms of domain architecture, Fibronectin type-III spans 474-567 (APMTPTILPS…ELIGLQTAEV (94 aa)). Residues 549–736 (NSAGEGEYSE…TMHTAMDAPK (188 aa)) form the B30.2/SPRY domain.

It belongs to the TRIM/RBCC family. In terms of assembly, interacts (via fibronectin type-III domain) with pico. Interacts (via SPRY domain) with netrin receptor fra.

Its subcellular location is the cell projection. It is found in the axon. It localises to the perikaryon. The enzyme catalyses S-ubiquitinyl-[E2 ubiquitin-conjugating enzyme]-L-cysteine + [acceptor protein]-L-lysine = [E2 ubiquitin-conjugating enzyme]-L-cysteine + N(6)-ubiquitinyl-[acceptor protein]-L-lysine.. It functions in the pathway protein modification; protein ubiquitination. E3 ubiquitin-protein ligase activity. During embryonic and larval development, regulates the pattern of axonal projections of class IV nociceptive sensory neurons (C4da) downstream of netrin receptor fra. Regulates fine-scale topography of C4da axon terminals upon neuronal activity. During eye development, consolidates the attachment of R8 photoreceptor growth cones to the target medulla layer, probably downstream of fra. The chain is E3 ubiquitin-protein ligase TRIM9 from Drosophila melanogaster (Fruit fly).